Consider the following 162-residue polypeptide: Ubiquitin-fold modifier-conjugating enzyme 1 (162 aa).

Cys115 acts as the Glycyl thioester intermediate in catalysis.

The protein belongs to the ubiquitin-conjugating enzyme family. UFC1 subfamily. As to quaternary structure, interacts with uba-5. As to expression, expressed in the intestine.

In terms of biological role, E2-like enzyme which forms an intermediate with ufm-1. The intermediate is formed via a thioester linkage. The sequence is that of Ubiquitin-fold modifier-conjugating enzyme 1 from Caenorhabditis elegans.